The following is a 247-amino-acid chain: D-alanyl-D-alanine dipeptidase (247 aa).

Residues histidine 140 and aspartate 147 each contribute to the Zn(2+) site. Glutamate 215 (proton donor/acceptor) is an active-site residue. Histidine 218 contacts Zn(2+).

It belongs to the peptidase M15D family. Requires Zn(2+) as cofactor.

It localises to the cytoplasm. The enzyme catalyses D-alanyl-D-alanine + H2O = 2 D-alanine. Functionally, catalyzes hydrolysis of the D-alanyl-D-alanine dipeptide. May have a role in cell-wall turnover. The polypeptide is D-alanyl-D-alanine dipeptidase (Synechocystis sp. (strain ATCC 27184 / PCC 6803 / Kazusa)).